Reading from the N-terminus, the 351-residue chain is UDP-3-O-acylglucosamine N-acyltransferase (351 aa).

Catalysis depends on H240, which acts as the Proton acceptor.

The protein belongs to the transferase hexapeptide repeat family. LpxD subfamily. Homotrimer.

The catalysed reaction is a UDP-3-O-[(3R)-3-hydroxyacyl]-alpha-D-glucosamine + a (3R)-hydroxyacyl-[ACP] = a UDP-2-N,3-O-bis[(3R)-3-hydroxyacyl]-alpha-D-glucosamine + holo-[ACP] + H(+). It functions in the pathway bacterial outer membrane biogenesis; LPS lipid A biosynthesis. In terms of biological role, catalyzes the N-acylation of UDP-3-O-acylglucosamine using 3-hydroxyacyl-ACP as the acyl donor. Is involved in the biosynthesis of lipid A, a phosphorylated glycolipid that anchors the lipopolysaccharide to the outer membrane of the cell. This is UDP-3-O-acylglucosamine N-acyltransferase from Pseudomonas syringae pv. tomato (strain ATCC BAA-871 / DC3000).